The following is a 514-amino-acid chain: Exoglucanase 1 (514 aa).

An N-terminal signal peptide occupies residues 1-17 (MYQKLALISAFLATARA). The catalytic stretch occupies residues 18–453 (QSACTLQAET…GSTGNSSGGN (436 aa)). Intrachain disulfides connect cysteine 21–cysteine 89, cysteine 36–cysteine 42, cysteine 67–cysteine 88, cysteine 78–cysteine 84, cysteine 155–cysteine 414, cysteine 189–cysteine 227, cysteine 193–cysteine 226, cysteine 247–cysteine 273, cysteine 255–cysteine 260, and cysteine 278–cysteine 348. N-linked (GlcNAc...) asparagine glycosylation is found at asparagine 62 and asparagine 81. Catalysis depends on glutamate 229, which acts as the Nucleophile. Glutamate 234 acts as the Proton donor in catalysis. N-linked (GlcNAc...) asparagine glycosylation is present at asparagine 287. Disordered stretches follow at residues 401 to 427 (NETS…LESN) and 444 to 481 (GSTG…PTQT). Residues 454-478 (PPGGNPPGTTTTRRPATSTGSSPGP) form a linker region. Residues 460–479 (PGTTTTRRPATSTGSSPGPT) show a composition bias toward low complexity. In terms of domain architecture, CBM1 spans 478–514 (PTQTHYGQCGGIGYSGPTVCASGSTCQVLNPYYSQCL). 2 cysteine pairs are disulfide-bonded: cysteine 486–cysteine 503 and cysteine 497–cysteine 513.

The protein belongs to the glycosyl hydrolase 7 (cellulase C) family.

The enzyme catalyses Hydrolysis of (1-&gt;4)-beta-D-glucosidic linkages in cellulose and cellotetraose, releasing cellobiose from the non-reducing ends of the chains.. Functionally, the biological conversion of cellulose to glucose generally requires three types of hydrolytic enzymes: (1) Endoglucanases which cut internal beta-1,4-glucosidic bonds; (2) Exocellobiohydrolases that cut the disaccharide cellobiose from the non-reducing end of the cellulose polymer chain; (3) Beta-1,4-glucosidases which hydrolyze the cellobiose and other short cello-oligosaccharides to glucose. The protein is Exoglucanase 1 (cbh1) of Hypocrea rufa (Trichoderma viride).